Here is a 314-residue protein sequence, read N- to C-terminus: Homoserine kinase (314 aa).

Position 95 to 105 (Pro-95 to Ser-105) interacts with ATP.

This sequence belongs to the GHMP kinase family. Homoserine kinase subfamily.

The protein localises to the cytoplasm. It carries out the reaction L-homoserine + ATP = O-phospho-L-homoserine + ADP + H(+). It functions in the pathway amino-acid biosynthesis; L-threonine biosynthesis; L-threonine from L-aspartate: step 4/5. Its function is as follows. Catalyzes the ATP-dependent phosphorylation of L-homoserine to L-homoserine phosphate. In Rhodococcus erythropolis (strain PR4 / NBRC 100887), this protein is Homoserine kinase.